Here is a 618-residue protein sequence, read N- to C-terminus: Baculoviral IAP repeat-containing protein 2 (618 aa).

BIR repeat units lie at residues 46–113 (ELYR…CSFI), 184–250 (EEAR…CPFL), and 269–336 (HAAR…CEFL). The Zn(2+) site is built by Cys-306, Cys-309, His-326, and Cys-333. Positions 453–543 (MASDDLSLIR…TLYKNLFVDK (91 aa)) constitute a CARD domain. The RING-type zinc finger occupies 571-606 (CKVCMDKEVSVVFIPCGHLVVCQECAPSLRKCPICR).

This sequence belongs to the IAP family. In terms of assembly, interacts with DIABLO/SMAC and with PRSS25; these interactions inhibit apoptotic suppressor activity. Interacts with CASP9. Interacts (via BIR domains) with TRAF2; the interaction is required for IKBKE ubiquitination. Interacts with E2F1, RIPK1, RIPK2, RIPK3, RIPK4, BIRC5/survivin and USP19. HSP90AB1. Interacts with UBXN1. Interacts with GSK3B. Interacts with several death receptors, inclusing FAS, TNFRSF10A and TNFRSF10B. Recruited to TNFRSF10B in the absence of receptor stimulation. When TNFRSF10B is stimulated, further recruited to the receptor and cleaved by caspases. Proteolytic fragments remain associated with TNFRSF10B. Auto-ubiquitinated and degraded by the proteasome in apoptotic cells. In terms of processing, upon stimulation of death receptors, including TNFRSF10B, recruited to receptors and cleaved by caspases. Proteolytic fragments remain associated with the receptors. This cleavage presumably inactivates the protein. In terms of tissue distribution, present in many fetal and adult tissues. Mainly expressed in adult skeletal muscle, thymus, testis, ovary, and pancreas, low or absent in brain and peripheral blood leukocytes.

Its subcellular location is the cytoplasm. It localises to the nucleus. It carries out the reaction S-ubiquitinyl-[E2 ubiquitin-conjugating enzyme]-L-cysteine + [acceptor protein]-L-lysine = [E2 ubiquitin-conjugating enzyme]-L-cysteine + N(6)-ubiquitinyl-[acceptor protein]-L-lysine.. Its activity is regulated as follows. The CARD domain inhibits the activation of E3 ubiquitin ligase activity by preventing RING domain dimerization and E2 ubiquitin donor binding and activation. The CARD domain-mediated autoinhibition of the E3 ubiquitin-protein ligase activity suppresses cell proliferation and migration. USP19 regulates the stability of BIRC2/c-IAP1 by preventing its ubiquitination. In terms of biological role, multi-functional protein which regulates not only caspases and apoptosis, but also modulates inflammatory signaling and immunity, mitogenic kinase signaling, and cell proliferation, as well as cell invasion and metastasis. Acts as an E3 ubiquitin-protein ligase regulating NF-kappa-B signaling and regulates both canonical and non-canonical NF-kappa-B signaling by acting in opposite directions: acts as a positive regulator of the canonical pathway and suppresses constitutive activation of non-canonical NF-kappa-B signaling. The target proteins for its E3 ubiquitin-protein ligase activity include: RIPK1, RIPK2, RIPK3, RIPK4, CASP3, CASP7, CASP8, TRAF2, DIABLO/SMAC, MAP3K14/NIK, MAP3K5/ASK1, IKBKG/NEMO, IKBKE and MXD1/MAD1. Can also function as an E3 ubiquitin-protein ligase of the NEDD8 conjugation pathway, targeting effector caspases for neddylation and inactivation. Acts as an important regulator of innate immune signaling via regulation of Toll-like receptors (TLRs), Nodlike receptors (NLRs) and RIG-I like receptors (RLRs), collectively referred to as pattern recognition receptors (PRRs). Protects cells from spontaneous formation of the ripoptosome, a large multi-protein complex that has the capability to kill cancer cells in a caspase-dependent and caspase-independent manner. Suppresses ripoptosome formation by ubiquitinating RIPK1 and CASP8. Can stimulate the transcriptional activity of E2F1. Plays a role in the modulation of the cell cycle. The protein is Baculoviral IAP repeat-containing protein 2 (BIRC2) of Homo sapiens (Human).